The chain runs to 126 residues: uncharacterized protein (126 aa).

This is an uncharacterized protein from Homo sapiens (Human).